The following is a 552-amino-acid chain: Glycosyltransferase family 92 protein RCOM_0530710 (552 aa).

Residues 12–34 (WNRFFWCTLLLVLSCVLFTASTF) traverse the membrane as a helical; Signal-anchor segment. The GT92 domain maps to 277-520 (KPHEMCICTM…GTRAVEPPDW (244 aa)).

It belongs to the glycosyltransferase 92 family.

Its subcellular location is the membrane. In Ricinus communis (Castor bean), this protein is Glycosyltransferase family 92 protein RCOM_0530710.